The chain runs to 316 residues: MARKSSAPQFLSYGDATGRLSWRDAVEALRQGHTLPQAQIRDVFLGPPTGTMMSRSAWIEGLGYGAKTFTVFDGNAARGLPTVQGAMLVFDKDDGRLQAIVDSPLVTEFKTAADSVLGASLLARPDSRHLLIVGAGTVAASLVRAYTAVLPGIERVSVWARRPQQAQDLIEGLDGIEADLAAVSDLPAAVGQADIVSSATMARQPVILGAWVRPGTHVDLIGAFKADMREADDALMARAALFVDSRETTLGHIGELMLPIASGAITAESVLGDLYDLVRPGARRRQSEDEITVFKNGGGAHLDLMIASYIARVMAG.

It belongs to the ornithine cyclodeaminase/mu-crystallin family.

It carries out the reaction L-proline + NAD(+) = 1-pyrroline-2-carboxylate + NADH + H(+). The catalysed reaction is L-proline + NADP(+) = 1-pyrroline-2-carboxylate + NADPH + H(+). Functionally, catalyzes the reduction of Delta(1)-pyrroline-2-carboxylate (Pyr2C) to L-proline, using preferentially NADPH over NADH as the electron donor. Is likely involved in a degradation pathway that converts trans-3-hydroxy-L-proline (t3LHyp) to L-proline, which would allow P.denitrificans to grow on t3LHyp as a sole carbon source. This Paracoccus denitrificans (strain Pd 1222) protein is Delta(1)-pyrroline-2-carboxylate reductase.